Consider the following 60-residue polypeptide: Potassium channel toxin alpha-KTx 15.9 (60 aa).

Residues 1–22 (MKIFLPVLVMLILCSMCLLTEG) form the signal peptide. 3 cysteine pairs are disulfide-bonded: Cys-30/Cys-51, Cys-36/Cys-56, and Cys-40/Cys-58.

Belongs to the short scorpion toxin superfamily. Potassium channel inhibitor family. Alpha-KTx 15 subfamily. As to expression, expressed by the venom gland.

It is found in the secreted. Functionally, blocker of A-type voltage-gated potassium channels of cerebellar granular cells. May also inhibit Kv4/KCND when coexpressed with DPP6 or DPP10. The occlusion of the outer entry of the K(+) conducting pore is partially reversible and affects both open and closed channels. It shares the same target in rat brain than BmTX3 (AC Q8I0L5) and AmmTX3 (AC P60208). Has been shown to weakly inhibit TRPV1 channels. The protein is Potassium channel toxin alpha-KTx 15.9 of Lychas mucronatus (Chinese swimming scorpion).